The following is a 317-amino-acid chain: MATH domain and coiled-coil domain-containing protein At3g58240 (317 aa).

The MATH domain occupies 6-131 (DNKFTWVIKN…DGEVEIVAQI (126 aa)). A coiled-coil region spans residues 254–305 (KLDWLEKKLDEVKEIKKKCERVTEMEKELHDLMNKHTNVSKLLEKEKLEIKN).

This Arabidopsis thaliana (Mouse-ear cress) protein is MATH domain and coiled-coil domain-containing protein At3g58240.